Here is a 146-residue protein sequence, read N- to C-terminus: uncharacterized protein (146 aa).

This is an uncharacterized protein from Acanthamoeba polyphaga mimivirus (APMV).